A 307-amino-acid polypeptide reads, in one-letter code: DDRGK domain-containing protein 1 (307 aa).

Residues 1-2 are Lumenal-facing; sequence MD. Residues 3–23 form a helical membrane-spanning segment; it reads LILLVGIAVALLVILATLYFL. At 24 to 307 the chain is on the cytoplasmic side; the sequence is QNKNKAAGEA…PVQSAAGGDS (284 aa). Low complexity-rich tracts occupy residues 32 to 43 and 54 to 83; these read EAKPAAAAPRRG and RRAQ…PAAA. The segment at 32–162 is disordered; the sequence is EAKPAAAAPR…EEVEAEAERK (131 aa). Residues 117-162 are compositionally biased toward basic and acidic residues; the sequence is KMEAKEQKRLQREHELQEREKRKVKEAKEDAERKQQEEVEAEAERK.

This sequence belongs to the DDRGK1 family. In terms of assembly, interacts with Atg9; the interaction is transient.

The protein resides in the endoplasmic reticulum membrane. Substrate adapter for ufmylation, the covalent attachment of the ubiquitin-like modifier UFM1 to substrate proteins. Required for ufmylation of Atg9; protects the nervous system during aging, possibly by stabilizing Atg9 and supporting its function. The sequence is that of DDRGK domain-containing protein 1 from Drosophila willistoni (Fruit fly).